Reading from the N-terminus, the 371-residue chain is MIARNQRTRVAVVYGGRSSEHAISCVSAGSILRNLDPERFDVVAVGITPDGSWVLTDGRPETLAITDGRLPEVSAESGTALALPADPGRRGELVSLSPAAAGEVLAAVDVVFPVLHGPYGEDGTIQGLLELAGVPYVGAGVLASAAGMDKEFTKKLLVAEGLPVGDHVVLRPGRANVTLDERERLGLPVFVKPARGGSSIGVSRVSDWAELPAAIEAARRHDPKVIVEAGIAGRELECGVLEYPDGRVDASTIGEIRVAGVRGREDGFYDFATKYLDDGAELDVPAKVEDDVADEIRRLAIRAFRAIDCQGLARVDFFLTDDGPVVNEINTMPGFTTISMYPRMWAASGVDYPTLLAAMVDTAVARGTGLR.

The region spanning 154–361 is the ATP-grasp domain; that stretch reads KKLLVAEGLP…YPTLLAAMVD (208 aa). 182 to 237 is an ATP binding site; it reads RERLGLPVFVKPARGGSSIGVSRVSDWAELPAAIEAARRHDPKVIVEAGIAGRELE. Residues D316, E328, and N330 each coordinate Mg(2+).

This sequence belongs to the D-alanine--D-alanine ligase family. Mg(2+) is required as a cofactor. Mn(2+) serves as cofactor.

The protein localises to the cytoplasm. It carries out the reaction 2 D-alanine + ATP = D-alanyl-D-alanine + ADP + phosphate + H(+). It functions in the pathway cell wall biogenesis; peptidoglycan biosynthesis. Cell wall formation. The protein is D-alanine--D-alanine ligase of Mycobacterium sp. (strain KMS).